The chain runs to 520 residues: Probable methylmalonate-semialdehyde/malonate-semialdehyde dehydrogenase [acylating], mitochondrial (520 aa).

NAD(+) contacts are provided by Ala-169, Phe-171, Lys-195, Glu-198, Arg-199, and Ser-248. Catalysis depends on Cys-303, which acts as the Nucleophile. Glu-403 provides a ligand contact to NAD(+).

This sequence belongs to the aldehyde dehydrogenase family. Homotetramer.

The protein localises to the mitochondrion. It carries out the reaction 2-methyl-3-oxopropanoate + NAD(+) + CoA + H2O = propanoyl-CoA + hydrogencarbonate + NADH + H(+). The enzyme catalyses 3-oxopropanoate + NAD(+) + CoA + H2O = hydrogencarbonate + acetyl-CoA + NADH + H(+). Functionally, probable malonate and methylmalonate semialdehyde dehydrogenase involved in the catabolism of valine, thymine, and compounds catabolized by way of beta-alanine, including uracil and cytidine. The polypeptide is Probable methylmalonate-semialdehyde/malonate-semialdehyde dehydrogenase [acylating], mitochondrial (Drosophila pseudoobscura pseudoobscura (Fruit fly)).